Consider the following 476-residue polypeptide: Ribulose bisphosphate carboxylase large chain (476 aa).

2 residues coordinate substrate: Asn-124 and Thr-174. The Proton acceptor role is filled by Lys-176. Residue Lys-178 participates in substrate binding. Residues Lys-202, Asp-204, and Glu-205 each contribute to the Mg(2+) site. N6-carboxylysine is present on Lys-202. His-295 serves as the catalytic Proton acceptor. Arg-296, His-328, and Ser-380 together coordinate substrate.

The protein belongs to the RuBisCO large chain family. Type I subfamily. As to quaternary structure, heterohexadecamer of 8 large chains and 8 small chains; disulfide-linked. The disulfide link is formed within the large subunit homodimers. The cofactor is Mg(2+). The disulfide bond which can form in the large chain dimeric partners within the hexadecamer appears to be associated with oxidative stress and protein turnover.

It is found in the carboxysome. It catalyses the reaction 2 (2R)-3-phosphoglycerate + 2 H(+) = D-ribulose 1,5-bisphosphate + CO2 + H2O. It carries out the reaction D-ribulose 1,5-bisphosphate + O2 = 2-phosphoglycolate + (2R)-3-phosphoglycerate + 2 H(+). RuBisCO catalyzes two reactions: the carboxylation of D-ribulose 1,5-bisphosphate, the primary event in carbon dioxide fixation, as well as the oxidative fragmentation of the pentose substrate in the photorespiration process. Both reactions occur simultaneously and in competition at the same active site. The chain is Ribulose bisphosphate carboxylase large chain from Trichodesmium erythraeum (strain IMS101).